A 130-amino-acid polypeptide reads, in one-letter code: Lysozyme C (130 aa).

A C-type lysozyme domain is found at 1–130 (KTYERCELAR…VSPWIRDCGL (130 aa)). Intrachain disulfides connect C6-C128, C30-C116, C65-C81, and C77-C95. Active-site residues include E35 and D53.

Belongs to the glycosyl hydrolase 22 family. As to quaternary structure, monomer.

It localises to the secreted. The enzyme catalyses Hydrolysis of (1-&gt;4)-beta-linkages between N-acetylmuramic acid and N-acetyl-D-glucosamine residues in a peptidoglycan and between N-acetyl-D-glucosamine residues in chitodextrins.. Functionally, lysozymes have primarily a bacteriolytic function; those in tissues and body fluids are associated with the monocyte-macrophage system and enhance the activity of immunoagents. The polypeptide is Lysozyme C (LYZ) (Chelonia mydas (Green sea-turtle)).